We begin with the raw amino-acid sequence, 491 residues long: 1-aminocyclopropane-1-carboxylate synthase (491 aa).

An N6-(pyridoxal phosphate)lysine modification is found at K278.

Belongs to the class-I pyridoxal-phosphate-dependent aminotransferase family. Homodimer. The cofactor is pyridoxal 5'-phosphate.

The enzyme catalyses S-adenosyl-L-methionine = 1-aminocyclopropane-1-carboxylate + S-methyl-5'-thioadenosine + H(+). Its pathway is alkene biosynthesis; ethylene biosynthesis via S-adenosyl-L-methionine; ethylene from S-adenosyl-L-methionine: step 1/2. In terms of biological role, catalyzes the formation of 1-aminocyclopropane-1-carboxylate, a direct precursor of ethylene in higher plants. This is 1-aminocyclopropane-1-carboxylate synthase (ACS1) from Nicotiana tabacum (Common tobacco).